The primary structure comprises 291 residues: Ribose-phosphate pyrophosphokinase (291 aa).

Residues 34-36 (DGE) and 93-94 (RQ) contribute to the ATP site. Residues H127 and D165 each contribute to the Mg(2+) site. K188 is an active-site residue. Residues R190, D216, and 220–224 (STGGT) each bind D-ribose 5-phosphate.

The protein belongs to the ribose-phosphate pyrophosphokinase family. Class III (archaeal) subfamily. Homodimer. The cofactor is Mg(2+).

The protein resides in the cytoplasm. The enzyme catalyses D-ribose 5-phosphate + ATP = 5-phospho-alpha-D-ribose 1-diphosphate + AMP + H(+). The protein operates within metabolic intermediate biosynthesis; 5-phospho-alpha-D-ribose 1-diphosphate biosynthesis; 5-phospho-alpha-D-ribose 1-diphosphate from D-ribose 5-phosphate (route I): step 1/1. Functionally, involved in the biosynthesis of the central metabolite phospho-alpha-D-ribosyl-1-pyrophosphate (PRPP) via the transfer of pyrophosphoryl group from ATP to 1-hydroxyl of ribose-5-phosphate (Rib-5-P). The protein is Ribose-phosphate pyrophosphokinase of Saccharolobus solfataricus (strain ATCC 35092 / DSM 1617 / JCM 11322 / P2) (Sulfolobus solfataricus).